We begin with the raw amino-acid sequence, 249 residues long: ATP synthase subunit a (249 aa).

The next 6 membrane-spanning stretches (helical) occupy residues Phe26–Leu46, Phe84–Phe104, Ile114–Phe134, Leu143–Ile163, Ile185–Ile205, and Ala208–Leu228.

This sequence belongs to the ATPase A chain family. As to quaternary structure, F-type ATPases have 2 components, CF(1) - the catalytic core - and CF(0) - the membrane proton channel. CF(1) has five subunits: alpha(3), beta(3), gamma(1), delta(1), epsilon(1). CF(0) has three main subunits: a(1), b(2) and c(9-12). The alpha and beta chains form an alternating ring which encloses part of the gamma chain. CF(1) is attached to CF(0) by a central stalk formed by the gamma and epsilon chains, while a peripheral stalk is formed by the delta and b chains.

The protein resides in the cell inner membrane. Functionally, key component of the proton channel; it plays a direct role in the translocation of protons across the membrane. The chain is ATP synthase subunit a from Brucella canis (strain ATCC 23365 / NCTC 10854 / RM-666).